The following is an 85-amino-acid chain: Large ribosomal subunit protein bL27 (85 aa).

The segment at 1 to 22 is disordered; it reads MAHKKGASSTRNGRDSNAQRLG. Positions 7-19 are enriched in polar residues; that stretch reads ASSTRNGRDSNAQ.

The protein belongs to the bacterial ribosomal protein bL27 family.

In Leifsonia xyli subsp. xyli (strain CTCB07), this protein is Large ribosomal subunit protein bL27.